The chain runs to 507 residues: Nuclear distribution protein PAC1 (507 aa).

Positions 72 to 98 (STVLRLQRKIMDLTDEVSNLKTIIEAK) form a coiled coil. WD repeat units lie at residues 125 to 164 (QTHQ…PSIP), 170 to 222 (AHSR…QIRI), 225 to 265 (GHDH…CTRT), 268 to 312 (GHSD…GLCL), 315 to 389 (GHSH…VRPN), 410 to 449 (GHQS…TGGR), and 474 to 507 (PKDT…RLWS).

This sequence belongs to the WD repeat LIS1/nudF family. In terms of assembly, self-associates. Interacts with NDL1 and dynein.

It localises to the cytoplasm. It is found in the cytoskeleton. The protein localises to the spindle pole. Its function is as follows. Positively regulates the activity of the minus-end directed microtubule motor protein dynein. Plays a central role in positioning the mitotic spindle at the bud neck during cell division. Targets cytoplasmic dynein to microtubule plus ends, thereby promoting dynein-mediated microtubule sliding along the bud cortex and consequently the movement of the mitotic spindle to the bud neck. The sequence is that of Nuclear distribution protein PAC1 from Meyerozyma guilliermondii (strain ATCC 6260 / CBS 566 / DSM 6381 / JCM 1539 / NBRC 10279 / NRRL Y-324) (Yeast).